Consider the following 155-residue polypeptide: Cytochrome c-type biogenesis protein CcmE (155 aa).

At 1 to 8 (MNPLRKKR) the chain is on the cytoplasmic side. A helical; Signal-anchor for type II membrane protein transmembrane segment spans residues 9–29 (LLIIVALLAGVGLAVTLALSA). The Periplasmic portion of the chain corresponds to 30–155 (LQENINLFYT…AASPTPVKQG (126 aa)). Residues histidine 124 and tyrosine 128 each coordinate heme.

It belongs to the CcmE/CycJ family.

The protein resides in the cell inner membrane. Functionally, heme chaperone required for the biogenesis of c-type cytochromes. Transiently binds heme delivered by CcmC and transfers the heme to apo-cytochromes in a process facilitated by CcmF and CcmH. The protein is Cytochrome c-type biogenesis protein CcmE of Pseudomonas syringae pv. syringae (strain B728a).